The chain runs to 584 residues: Sulfite reductase [NADPH] hemoprotein beta-component (584 aa).

Positions 447, 453, 492, and 496 each coordinate [4Fe-4S] cluster. Residue cysteine 496 participates in siroheme binding.

This sequence belongs to the nitrite and sulfite reductase 4Fe-4S domain family. Alpha(8)-beta(8). The alpha component is a flavoprotein, the beta component is a hemoprotein. It depends on siroheme as a cofactor. Requires [4Fe-4S] cluster as cofactor.

The catalysed reaction is hydrogen sulfide + 3 NADP(+) + 3 H2O = sulfite + 3 NADPH + 4 H(+). The protein operates within sulfur metabolism; hydrogen sulfide biosynthesis; hydrogen sulfide from sulfite (NADPH route): step 1/1. Component of the sulfite reductase complex that catalyzes the 6-electron reduction of sulfite to sulfide. This is one of several activities required for the biosynthesis of L-cysteine from sulfate. The protein is Sulfite reductase [NADPH] hemoprotein beta-component of Colwellia psychrerythraea (strain 34H / ATCC BAA-681) (Vibrio psychroerythus).